A 215-amino-acid polypeptide reads, in one-letter code: 24 kDa Ras-like protein (215 aa).

Residue 17–24 (GGGGVGKS) participates in GTP binding. The Effector region motif lies at 39–47 (YDPTIEDSY). Residues 64–68 (DTAGQ) and 123–126 (NKCD) each bind GTP. The tract at residues 179 to 199 (QTGRPAIAAGGGGPAGSYTQD) is disordered. C212 carries the cysteine methyl ester modification. Residue C212 is the site of S-farnesyl cysteine attachment. A propeptide spans 213–215 (VIA) (removed in mature form).

It belongs to the small GTPase superfamily. Ras family.

The protein resides in the cell membrane. The catalysed reaction is GTP + H2O = GDP + phosphate + H(+). In terms of biological role, ras proteins bind GDP/GTP and possess intrinsic GTPase activity. In Coprinopsis cinerea (strain Okayama-7 / 130 / ATCC MYA-4618 / FGSC 9003) (Inky cap fungus), this protein is 24 kDa Ras-like protein (CC-RAS).